A 291-amino-acid chain; its full sequence is ATP synthase gamma chain (291 aa).

Belongs to the ATPase gamma chain family. In terms of assembly, F-type ATPases have 2 components, CF(1) - the catalytic core - and CF(0) - the membrane proton channel. CF(1) has five subunits: alpha(3), beta(3), gamma(1), delta(1), epsilon(1). CF(0) has three main subunits: a, b and c.

The protein localises to the cell membrane. Functionally, produces ATP from ADP in the presence of a proton gradient across the membrane. The gamma chain is believed to be important in regulating ATPase activity and the flow of protons through the CF(0) complex. This is ATP synthase gamma chain from Streptococcus uberis (strain ATCC BAA-854 / 0140J).